The following is a 101-amino-acid chain: DET1- and DDB1-associated protein 1 (101 aa).

The tract at residues 67–101 is disordered; sequence NAAKKRDQDQLEIGETSAPPRKIARTDSQEMNEDT.

Belongs to the DDA1 family. Component of numerous DCX (DDB1-CUL4-X-box) E3 ubiquitin-protein ligase complexes which consist of a core of DDB1, cullin-4 (CUL4A or CUL4B), DDA1 and RBX1.

Its pathway is protein modification; protein ubiquitination. Functionally, functions as a component of numerous distinct DCX (DDB1-CUL4-X-box) E3 ubiquitin-protein ligase complexes which mediate the ubiquitination and subsequent proteasomal degradation of target proteins. In the DCX complexes, acts as a scaffolding subunit required to stabilize the complex. The protein is DET1- and DDB1-associated protein 1 of Xenopus laevis (African clawed frog).